The following is a 78-amino-acid chain: Apolipoprotein C-I (78 aa).

Residues 1 to 26 (MRLILWLPVLVVVLLMVLEGPAPAQG) form the signal peptide.

This sequence belongs to the apolipoprotein C1 family.

Its subcellular location is the secreted. Functionally, inhibitor of lipoprotein binding to the low density lipoprotein (LDL) receptor, LDL receptor-related protein, and very low density lipoprotein (VLDL) receptor. Associates with high density lipoproteins (HDL) and the triacylglycerol-rich lipoproteins in the plasma and makes up about 10% of the protein of the VLDL and 2% of that of HDL. Appears to interfere directly with fatty acid uptake and is also the major plasma inhibitor of cholesteryl ester transfer protein (CETP). Binds free fatty acids and reduces their intracellular esterification. Modulates the interaction of APOE with beta-migrating VLDL and inhibits binding of beta-VLDL to the LDL receptor-related protein. This Lynx pardinus (Iberian lynx) protein is Apolipoprotein C-I (APOC1).